Consider the following 213-residue polypeptide: MDPIAENILSDLKKEVLREVTREKASRFSRIVKNESSAKNYAKAMFDIASDIGKIEVIKSDLNVVYSSLLVDNDIFNFFKSSFIDGHLRMRILKKIYADKILEETFNLIAILVERDMINILFAIIVEYENLCNEYYNIIVVKITTASNMTDTEDMNKLKDHITNMISDKDIHFTFNIDENIIGGVVIEVEDVVYDYSVRRLLTELKSSISENN.

The protein belongs to the ATPase delta chain family. In terms of assembly, F-type ATPases have 2 components, F(1) - the catalytic core - and F(0) - the membrane proton channel. F(1) has five subunits: alpha(3), beta(3), gamma(1), delta(1), epsilon(1). F(0) has three main subunits: a(1), b(2) and c(10-14). The alpha and beta chains form an alternating ring which encloses part of the gamma chain. F(1) is attached to F(0) by a central stalk formed by the gamma and epsilon chains, while a peripheral stalk is formed by the delta and b chains.

It localises to the cell inner membrane. In terms of biological role, f(1)F(0) ATP synthase produces ATP from ADP in the presence of a proton or sodium gradient. F-type ATPases consist of two structural domains, F(1) containing the extramembraneous catalytic core and F(0) containing the membrane proton channel, linked together by a central stalk and a peripheral stalk. During catalysis, ATP synthesis in the catalytic domain of F(1) is coupled via a rotary mechanism of the central stalk subunits to proton translocation. Its function is as follows. This protein is part of the stalk that links CF(0) to CF(1). It either transmits conformational changes from CF(0) to CF(1) or is implicated in proton conduction. In Brachyspira hyodysenteriae (strain ATCC 49526 / WA1), this protein is ATP synthase subunit delta 2.